We begin with the raw amino-acid sequence, 166 residues long: MSEQQAFRDAMSRLGAAVNIVTTDGPAGMAGFTASAVCSVTDSPPTLLVCLNRNASVWPVFQANGQLCVNTLAAGHEALSGLFGGKTPMEERFAAARWRRGVTGSPQLDGAVVSFDCRVEQVVPVSTHDVLLCRVLEITRNDDTHGLVWFDRHYHALSRPVCGLAS.

It belongs to the non-flavoprotein flavin reductase family. RutF subfamily.

The enzyme catalyses FMNH2 + NAD(+) = FMN + NADH + 2 H(+). Catalyzes the reduction of FMN to FMNH2 which is used to reduce pyrimidine by RutA via the Rut pathway. The protein is FMN reductase (NADH) RutF of Cronobacter turicensis (strain DSM 18703 / CCUG 55852 / LMG 23827 / z3032).